Reading from the N-terminus, the 156-residue chain is tRNA-specific adenosine deaminase (156 aa).

One can recognise a CMP/dCMP-type deaminase domain in the interval 2 to 120 (TNDIYFMTLA…GSLMNLLQQS (119 aa)). Residue His53 participates in Zn(2+) binding. The Proton donor role is filled by Glu55. The Zn(2+) site is built by Cys83 and Cys86.

It belongs to the cytidine and deoxycytidylate deaminase family. As to quaternary structure, homodimer. Requires Zn(2+) as cofactor.

It catalyses the reaction adenosine(34) in tRNA + H2O + H(+) = inosine(34) in tRNA + NH4(+). Catalyzes the deamination of adenosine to inosine at the wobble position 34 of tRNA(Arg2). In Staphylococcus aureus (strain Mu50 / ATCC 700699), this protein is tRNA-specific adenosine deaminase.